Consider the following 204-residue polypeptide: Large ribosomal subunit protein eL15 (204 aa).

Residues 155-204 (VHKHREQRGLTSAGRKSRGLGKGWRFSATRGGSQAKNWKRKNTKVFHRKR) are disordered. Residues 191-204 (NWKRKNTKVFHRKR) are compositionally biased toward basic residues.

It belongs to the eukaryotic ribosomal protein eL15 family.

This is Large ribosomal subunit protein eL15 (rpl-15) from Caenorhabditis elegans.